The sequence spans 120 residues: NAD(P)H-quinone oxidoreductase subunit 3, chloroplastic (120 aa).

Helical transmembrane passes span 9 to 29, 64 to 84, and 88 to 108; these read IFWAFLIISSLIPILAFFISG, MFALVFVVFDVETVFLYPWAM, and VLGVSVFIEALIFVLILIVGL.

The protein belongs to the complex I subunit 3 family. NDH is composed of at least 16 different subunits, 5 of which are encoded in the nucleus.

Its subcellular location is the plastid. It localises to the chloroplast thylakoid membrane. It carries out the reaction a plastoquinone + NADH + (n+1) H(+)(in) = a plastoquinol + NAD(+) + n H(+)(out). The enzyme catalyses a plastoquinone + NADPH + (n+1) H(+)(in) = a plastoquinol + NADP(+) + n H(+)(out). In terms of biological role, NDH shuttles electrons from NAD(P)H:plastoquinone, via FMN and iron-sulfur (Fe-S) centers, to quinones in the photosynthetic chain and possibly in a chloroplast respiratory chain. The immediate electron acceptor for the enzyme in this species is believed to be plastoquinone. Couples the redox reaction to proton translocation, and thus conserves the redox energy in a proton gradient. The sequence is that of NAD(P)H-quinone oxidoreductase subunit 3, chloroplastic from Panax ginseng (Korean ginseng).